The primary structure comprises 306 residues: MSITKTELDGILPLVARGKVRDIYEVDAGTLLFVATDRISAYDVIMENSIPEKGILLTKLSEFWFKFLSNDVRNHLVDIAPGKTIFDYLPAKLSEPKYKTQLEDRSLLVHKHKLIPLEVIVRGYITGSAWKEYVKTGTVHGLKQPQGLKESQEFPEPIFTPSTKAEQGEHDENISPAQAAELVGEDLSRRVAELAVKLYSKCKDYAKEKGIIIADTKFEFGIDEKTNEIILVDEVLTPDSSRFWNGASYKVGESQDSYDKQFLRDWLTANKLNGVNGVKMPQDIVDRTRAKYIEAYETLTGSKWSH.

S2 is subject to N-acetylserine.

It belongs to the SAICAR synthetase family. In terms of assembly, monomer.

The catalysed reaction is 5-amino-1-(5-phospho-D-ribosyl)imidazole-4-carboxylate + L-aspartate + ATP = (2S)-2-[5-amino-1-(5-phospho-beta-D-ribosyl)imidazole-4-carboxamido]succinate + ADP + phosphate + 2 H(+). The protein operates within purine metabolism; IMP biosynthesis via de novo pathway; 5-amino-1-(5-phospho-D-ribosyl)imidazole-4-carboxamide from 5-amino-1-(5-phospho-D-ribosyl)imidazole-4-carboxylate: step 1/2. Its function is as follows. Catalyzes the reaction of 4-carboxy-5-aminoimidazole ribotide (CAIR) and aspartic acid with the formation of N-succinyl-5-amino-imidazole-4-carboxamide ribotide (SAICAR) in the purine biosynthesis pathway. In Saccharomyces cerevisiae (strain ATCC 204508 / S288c) (Baker's yeast), this protein is Phosphoribosylaminoimidazole-succinocarboxamide synthase (ADE1).